We begin with the raw amino-acid sequence, 216 residues long: Probable GTP-binding protein EngB (216 aa).

An EngB-type G domain is found at 26–210 (PMATIIFAGR…KNRIFEVIRE (185 aa)). GTP-binding positions include 34–41 (GRSNVGKS), 59–63 (GVTRK), 76–79 (DMPG), 156–159 (NKLD), and 189–191 (ISA). 2 residues coordinate Mg(2+): serine 41 and threonine 61.

The protein belongs to the TRAFAC class TrmE-Era-EngA-EngB-Septin-like GTPase superfamily. EngB GTPase family. Requires Mg(2+) as cofactor.

Its function is as follows. Necessary for normal cell division and for the maintenance of normal septation. The polypeptide is Probable GTP-binding protein EngB (Pyrococcus horikoshii (strain ATCC 700860 / DSM 12428 / JCM 9974 / NBRC 100139 / OT-3)).